A 96-amino-acid polypeptide reads, in one-letter code: Carboxysome shell protein CsoS1A (96 aa).

One can recognise a BMC domain in the interval 7–92; that stretch reads ALGMIETRGL…PHKEVEPVLT (86 aa).

It belongs to the bacterial microcompartments protein family. CsoS1 subfamily. Homohexamer with a small central pore. Forms a CsoS2-CsoS1-RuBisCO complex.

The protein localises to the carboxysome. One of shell proteins of the carboxysome, a polyhedral inclusion where RuBisCO (ribulose bisphosphate carboxylase, ccbL-ccbS) is sequestered. Assembles into hexamers which make sheets that form the facets of the polyhedral carboxysome. The shell probably limits the diffusion of CO(2) into and out of the carboxysome. The polypeptide is Carboxysome shell protein CsoS1A (Hydrogenovibrio crunogenus (strain DSM 25203 / XCL-2) (Thiomicrospira crunogena)).